A 358-amino-acid polypeptide reads, in one-letter code: Biotin synthase (358 aa).

Residues 44-272 (NRVRLNYLVN…DSEVRAAAGR (229 aa)) form the Radical SAM core domain. The [4Fe-4S] cluster site is built by Cys-59, Cys-63, and Cys-66. Residues Cys-103, Cys-136, Cys-196, and Arg-267 each contribute to the [2Fe-2S] cluster site.

Belongs to the radical SAM superfamily. Biotin synthase family. In terms of assembly, homodimer. The cofactor is [4Fe-4S] cluster. Requires [2Fe-2S] cluster as cofactor.

It carries out the reaction (4R,5S)-dethiobiotin + (sulfur carrier)-SH + 2 reduced [2Fe-2S]-[ferredoxin] + 2 S-adenosyl-L-methionine = (sulfur carrier)-H + biotin + 2 5'-deoxyadenosine + 2 L-methionine + 2 oxidized [2Fe-2S]-[ferredoxin]. The protein operates within cofactor biosynthesis; biotin biosynthesis; biotin from 7,8-diaminononanoate: step 2/2. In terms of biological role, catalyzes the conversion of dethiobiotin (DTB) to biotin by the insertion of a sulfur atom into dethiobiotin via a radical-based mechanism. The sequence is that of Biotin synthase from Cutibacterium acnes (strain DSM 16379 / KPA171202) (Propionibacterium acnes).